The chain runs to 377 residues: Stimulator of interferon genes protein 7 (377 aa).

A run of 4 helical transmembrane segments spans residues 30–50 (TAAI…FLAV), 57–77 (THFL…GELL), 106–126 (FTFD…LILC), and 141–161 (FAIL…LVGL).

This sequence belongs to the STING family.

It localises to the membrane. In terms of biological role, facilitator of innate immune signaling that acts as a sensor of second messenger signals produced by cyclic GMP-AMP synthase-like receptors (cGLRs) and promotes the production of type I interferon. Innate immune response is triggered in response to nucleotides from viruses and bacteria delivered to the cytoplasm. Acts by binding cyclic dinucleotides: recognizes and binds a large variety of 2'-3'- and 3'-3' linked cyclic dinucleotides (2'-3'-cGAMP, 3'-3'-cGAMP, 2',3'-cUAMP, 3',3'-cUAMP and/or 3',3'-c-di-GMP) second messengers produced by cGLRs in response to nucleotides in the cytosol, such as double-stranded RNA (dsRNA). Upon binding to cyclic dinucleotides, oligomerizes and promotes the recruitment and subsequent activation of the transcription factor IRF3 to induce expression of type I interferon. This chain is Stimulator of interferon genes protein 7, found in Stylophora pistillata (Smooth cauliflower coral).